The following is a 432-amino-acid chain: MGHLGALLFLLGGLGALANICEITEVDSTLVERLGQRLLPWMDRLSQEQLNPSIYVGLRLSSLQAGAKEAHYLHSLKLSYQQSLLRPASNKDDNDSEAKPSMGQLALYLLALRANCEFIGGRKGDRLVSQLKRFLEDEKRAIGHNHQGHPRTSYYQYSLGILALCVHQKRVHDSVVGKLLYAVEHKPHLLQDHVSVDTMAMAGMAFSCLELSNLNPKQRNRINLALKRVQEKILKAQTPEGYFGNVYSTPLALQLLMGSLRPSVELGTACLKAKAALQASLQHKTFQNPLMISQLLPVLNQKSYVDLISPDCQAPRALLEPALETPPQAKVPKFIDVLLKVSGISPSYRHSVSVPAGSSLEDILKNAQEHGRFRFRTQASLSGPFLTSVLGRKAGEREFWQVLRDPDTPLQQGIADYRPKDGETIELRLVGW.

The first 18 residues, 1-18 (MGHLGALLFLLGGLGALA), serve as a signal peptide directing secretion. 3 disulfide bridges follow: cysteine 21-cysteine 270, cysteine 116-cysteine 312, and cysteine 165-cysteine 208. A glycan (N-linked (GlcNAc...) asparagine) is linked at asparagine 94. Cob(II)alamin is bound by residues glutamine 104, 152–156 (TSYYQ), histidine 193, 193–197 (HVSVD), asparagine 245, serine 248, glutamine 294, and 400–402 (WQV).

Belongs to the eukaryotic cobalamin transport proteins family. In terms of assembly, interacts with CD320 (via LDL-receptor class A domains). As to expression, expressed in mammary gland, kidney, lymphatic nodes and liver.

Its subcellular location is the secreted. In terms of biological role, primary vitamin B12-binding and transport protein. Delivers cobalamin to cells. This chain is Transcobalamin-2 (TCN2), found in Bos taurus (Bovine).